Here is a 261-residue protein sequence, read N- to C-terminus: Phosphatidylglycerol--prolipoprotein diacylglyceryl transferase (261 aa).

3 helical membrane passes run 20–40, 54–74, and 94–114; these read LAIH…VWLA, IIDF…LYYV, and GGGA…VFSY. An a 1,2-diacyl-sn-glycero-3-phospho-(1'-sn-glycerol)-binding site is contributed by arginine 139. A run of 3 helical transmembrane segments spans residues 175–195, 205–225, and 235–255; these read MPTF…VMVF, GDIF…VEGM, and ARVS…LFIY.

The protein belongs to the Lgt family.

The protein localises to the cell membrane. It catalyses the reaction L-cysteinyl-[prolipoprotein] + a 1,2-diacyl-sn-glycero-3-phospho-(1'-sn-glycerol) = an S-1,2-diacyl-sn-glyceryl-L-cysteinyl-[prolipoprotein] + sn-glycerol 1-phosphate + H(+). The protein operates within protein modification; lipoprotein biosynthesis (diacylglyceryl transfer). Catalyzes the transfer of the diacylglyceryl group from phosphatidylglycerol to the sulfhydryl group of the N-terminal cysteine of a prolipoprotein, the first step in the formation of mature lipoproteins. The polypeptide is Phosphatidylglycerol--prolipoprotein diacylglyceryl transferase (Lactococcus lactis subsp. lactis (strain IL1403) (Streptococcus lactis)).